Reading from the N-terminus, the 103-residue chain is Nucleoid-associated protein NIS_0256 (103 aa).

The protein belongs to the YbaB/EbfC family. Homodimer.

The protein resides in the cytoplasm. The protein localises to the nucleoid. Functionally, binds to DNA and alters its conformation. May be involved in regulation of gene expression, nucleoid organization and DNA protection. The chain is Nucleoid-associated protein NIS_0256 from Nitratiruptor sp. (strain SB155-2).